Here is a 254-residue protein sequence, read N- to C-terminus: Type III pantothenate kinase (254 aa).

13-20 (MIGNTRQH) contacts ATP. Substrate is bound by residues Tyr84 and 88-91 (GLDR). Asp90 acts as the Proton acceptor in catalysis. K(+) is bound at residue Asp110. ATP is bound at residue Thr113. Thr166 provides a ligand contact to substrate.

This sequence belongs to the type III pantothenate kinase family. Homodimer. NH4(+) is required as a cofactor. The cofactor is K(+).

It is found in the cytoplasm. The enzyme catalyses (R)-pantothenate + ATP = (R)-4'-phosphopantothenate + ADP + H(+). It participates in cofactor biosynthesis; coenzyme A biosynthesis; CoA from (R)-pantothenate: step 1/5. Its function is as follows. Catalyzes the phosphorylation of pantothenate (Pan), the first step in CoA biosynthesis. In Thermosynechococcus vestitus (strain NIES-2133 / IAM M-273 / BP-1), this protein is Type III pantothenate kinase.